The chain runs to 368 residues: WAT1-related protein At5g40240 (368 aa).

The next 10 helical transmembrane spans lie at 18-38 (VVPFAAMFAVECATVGSNTLF), 50-70 (VFVFYSYIVSTLLLLPLSVIF), 82-102 (PLFFKIFLLGLVGFMSQIAGC), 111-131 (TLASAISNLTPAFTFTLAVIF), 142-162 (ATQAKIIGAILSISGALVVVL), 194-214 (WIIGGLLLASQYFLISVWYIL), 226-246 (ITVVFFYNLFATLISVPVCLF), 260-280 (ISLAAIIYSGVFVSLFSALTH), 292-312 (ISLFRPLSIAIAVAMGAIFLG), and 315-335 (LHLGSVIGSMILCIGFYTVIW). EamA domains lie at 33-161 (GSNT…LVVV) and 208-334 (ISVW…YTVI).

The protein belongs to the drug/metabolite transporter (DMT) superfamily. Plant drug/metabolite exporter (P-DME) (TC 2.A.7.4) family.

The protein localises to the membrane. The sequence is that of WAT1-related protein At5g40240 from Arabidopsis thaliana (Mouse-ear cress).